The chain runs to 481 residues: UDP-N-acetylmuramoylalanine--D-glutamate ligase (481 aa).

Residue 108–114 (GTNGKTS) participates in ATP binding.

This sequence belongs to the MurCDEF family.

It localises to the cytoplasm. The catalysed reaction is UDP-N-acetyl-alpha-D-muramoyl-L-alanine + D-glutamate + ATP = UDP-N-acetyl-alpha-D-muramoyl-L-alanyl-D-glutamate + ADP + phosphate + H(+). Its pathway is cell wall biogenesis; peptidoglycan biosynthesis. In terms of biological role, cell wall formation. Catalyzes the addition of glutamate to the nucleotide precursor UDP-N-acetylmuramoyl-L-alanine (UMA). The chain is UDP-N-acetylmuramoylalanine--D-glutamate ligase from Bifidobacterium longum subsp. infantis (strain ATCC 15697 / DSM 20088 / JCM 1222 / NCTC 11817 / S12).